The chain runs to 164 residues: Endoribonuclease YbeY (164 aa).

Positions 132, 136, and 142 each coordinate Zn(2+).

Belongs to the endoribonuclease YbeY family. Zn(2+) serves as cofactor.

It localises to the cytoplasm. Single strand-specific metallo-endoribonuclease involved in late-stage 70S ribosome quality control and in maturation of the 3' terminus of the 16S rRNA. The chain is Endoribonuclease YbeY from Clostridium kluyveri (strain NBRC 12016).